Consider the following 158-residue polypeptide: NADPH-dependent 7-cyano-7-deazaguanine reductase (158 aa).

Residues Met-1–Pro-37 are disordered. The segment covering Glu-27–Pro-37 has biased composition (basic and acidic residues). Cys-56 (thioimide intermediate) is an active-site residue. Asp-63 serves as the catalytic Proton donor. Substrate-binding positions include Val-78 to Ser-80 and His-97 to Glu-98.

It belongs to the GTP cyclohydrolase I family. QueF type 1 subfamily.

It is found in the cytoplasm. The enzyme catalyses 7-aminomethyl-7-carbaguanine + 2 NADP(+) = 7-cyano-7-deazaguanine + 2 NADPH + 3 H(+). The protein operates within tRNA modification; tRNA-queuosine biosynthesis. In terms of biological role, catalyzes the NADPH-dependent reduction of 7-cyano-7-deazaguanine (preQ0) to 7-aminomethyl-7-deazaguanine (preQ1). The protein is NADPH-dependent 7-cyano-7-deazaguanine reductase of Bradyrhizobium sp. (strain BTAi1 / ATCC BAA-1182).